The sequence spans 471 residues: Putative multidrug resistance protein MdtD (471 aa).

The Periplasmic segment spans residues 1–11 (MTDLPDSTRWQ). Residues 12–32 (LWIVAFGFFMQSLDTTIVNTA) form a helical membrane-spanning segment. The Cytoplasmic segment spans residues 33–48 (LPSMAQSLGESPLHMH). A helical transmembrane segment spans residues 49–69 (MVIVSYVLTVAVMLPASGWLA). Residues 70–76 (DKVGVRN) are Periplasmic-facing. Residues 77-97 (IFFTAIVLFTLGSLFCALSGT) traverse the membrane as a helical segment. Over 98 to 101 (LNEL) the chain is Cytoplasmic. A helical membrane pass occupies residues 102–124 (LLARALQGVGGAMMVPVGRLTVM). Residues 125–137 (KIVPREQYMAAMT) are Periplasmic-facing. A helical membrane pass occupies residues 138-158 (FVTLPGQVGPLLGPALGGLLV). Residues 159 to 164 (EYASWH) are Cytoplasmic-facing. The chain crosses the membrane as a helical span at residues 165 to 185 (WIFLINIPVGIIGAIATLMLM). Over 186 to 196 (PNYTMQTRRFD) the chain is Periplasmic. A helical transmembrane segment spans residues 197–217 (LSGFLLLAVGMAVLTLALDGS). Residues 218–224 (KGTGLSP) lie on the Cytoplasmic side of the membrane. The chain crosses the membrane as a helical span at residues 225–245 (LAIAGLVAVGVVALVLYLLHA). At 246–262 (RNNNRALFSLKLFRTRT) the chain is on the periplasmic side. The chain crosses the membrane as a helical span at residues 263–283 (FSLGLAGSFAGRIGSGMLPFM). The Cytoplasmic segment spans residues 284-285 (TP). The chain crosses the membrane as a helical span at residues 286 to 306 (VFLQIGLGFSPFHAGLMMIPM). Topologically, residues 307-341 (VLGSMGMKRIVVQVVNRFGYRRVLVATTLGLSLVT) are periplasmic. Residues 342 to 362 (LLFMTTALLGWYYVLPFVLFL) form a helical membrane-spanning segment. The Cytoplasmic portion of the chain corresponds to 363–395 (QGMVNSTRFSSMNTLTLKDLPDNLASSGNSLLS). Residues 396–416 (MIMQLSMSIGVTIAGLLLGLF) form a helical membrane-spanning segment. The Periplasmic portion of the chain corresponds to 417–430 (GSQHVSIDSGTTQT). A helical membrane pass occupies residues 431-451 (VFMYTWLSMALIIALPAFIFA). Over 452–471 (RVPNDTHQNVAISRRKRSAQ) the chain is Cytoplasmic.

It belongs to the major facilitator superfamily. TCR/Tet family.

The protein localises to the cell inner membrane. This chain is Putative multidrug resistance protein MdtD, found in Escherichia coli (strain 55989 / EAEC).